The sequence spans 193 residues: Xanthine phosphoribosyltransferase (193 aa).

L20 and T27 together coordinate xanthine. 128-132 lines the 5-phospho-alpha-D-ribose 1-diphosphate pocket; it reads ANGQA. Residue K156 coordinates xanthine.

This sequence belongs to the purine/pyrimidine phosphoribosyltransferase family. Xpt subfamily. As to quaternary structure, homodimer.

The protein resides in the cytoplasm. The enzyme catalyses XMP + diphosphate = xanthine + 5-phospho-alpha-D-ribose 1-diphosphate. Its pathway is purine metabolism; XMP biosynthesis via salvage pathway; XMP from xanthine: step 1/1. Converts the preformed base xanthine, a product of nucleic acid breakdown, to xanthosine 5'-monophosphate (XMP), so it can be reused for RNA or DNA synthesis. The polypeptide is Xanthine phosphoribosyltransferase (Streptococcus equi subsp. zooepidemicus (strain H70)).